Here is a 460-residue protein sequence, read N- to C-terminus: Benzyl alcohol O-benzoyltransferase (460 aa).

Residues His-167 and Asp-382 each act as proton acceptor in the active site.

Belongs to the plant acyltransferase family. In terms of tissue distribution, specifically expressed in flowers, mainly in the limb of flowers corollas, and, at low levels, in roots, stems, sepals and leaves.

The enzyme catalyses benzyl alcohol + benzoyl-CoA = benzyl benzoate + CoA. It carries out the reaction benzyl alcohol + acetyl-CoA = benzyl acetate + CoA. The catalysed reaction is 3-hydroxybenzyl alcohol + acetyl-CoA = 3-hydroxy-benzyl acetate + CoA. It catalyses the reaction 3-hydroxybenzyl alcohol + benzoyl-CoA = 3-hydroxy-benzyl benzoate + CoA. The enzyme catalyses 2-phenylethanol + benzoyl-CoA = phenethyl benzoate + CoA. It carries out the reaction (3Z)-hex-3-en-1-ol + benzoyl-CoA = (3Z)-hex-3-en-1-yl benzoate + CoA. The catalysed reaction is (2E)-geraniol + acetyl-CoA = (2E)-geranyl acetate + CoA. It catalyses the reaction butan-1-ol + benzoyl-CoA = butyl benzoate + CoA. The enzyme catalyses (2E)-geraniol + benzoyl-CoA = (2E)-geranyl benzoate + CoA. It carries out the reaction octan-1-ol + benzoyl-CoA = octyl benzoate + CoA. It participates in aromatic compound metabolism; benzoyl-CoA degradation. Functionally, involved in the production of volatile organic compounds (VOCs), including floral volatile benzenoids and phenylpropanoids (FVBP), in flowers of fragrant cultivars (e.g. cv. Mitchell and cv. V26), scent attracting pollinators (e.g. the night-active hawkmoth pollinator Manduca sexta). Acyltransferase that catalyzes the transfer of benzoyl and acetyl moieties to a large variety of potential substrate alcohols, and involved in the formation of volatile esters benzyl benzoate and phenylethyl benzoate from benzoyl-CoA. With acetyl-CoA, mainly active on benzyl alcohol, and, to a lower extent, on 3-hydroxybenzyl alcohol, geraniol, and 2-phenylethanol, but barely active on butanol, 1-octanol, 4-hydroxy-benzyl alcohol, 2-hexanol, cis-3-hexen-1-ol and linalool. With benzoyl-CoA, mainly active on benzyl alcohol, but also efficient on several substrates, including 3-hydroxybenzyl alcohol, 2-phenylethanol, geraniol, butanol, cis-3-hexen-1-ol and 1-octanol. This chain is Benzyl alcohol O-benzoyltransferase, found in Petunia hybrida (Petunia).